Consider the following 499-residue polypeptide: Probable dipeptidase B (499 aa).

The active site involves cysteine 26.

It belongs to the peptidase C69 family.

It carries out the reaction an L-aminoacyl-L-amino acid + H2O = 2 an L-alpha-amino acid. In Streptococcus pyogenes serotype M18 (strain MGAS8232), this protein is Probable dipeptidase B (pepDB).